The primary structure comprises 132 residues: Long-chain acyl-CoA thioesterase FadM (132 aa).

Residue Asp13 is part of the active site.

This sequence belongs to the 4-hydroxybenzoyl-CoA thioesterase family. As to quaternary structure, homotetramer.

The enzyme catalyses (3E,5Z)-tetradecadienoyl-CoA + H2O = (3E,5Z)-tetradecadienoate + CoA + H(+). It catalyses the reaction (3E,5Z)-dodecadienoyl-CoA + H2O = (3E,5Z)-dodecadienoate + CoA + H(+). The catalysed reaction is (9Z)-octadecenoyl-CoA + H2O = (9Z)-octadecenoate + CoA + H(+). It carries out the reaction octadecanoyl-CoA + H2O = octadecanoate + CoA + H(+). The enzyme catalyses hexadecanoyl-CoA + H2O = hexadecanoate + CoA + H(+). It catalyses the reaction (3S)-hydroxytetradecanoyl-CoA + H2O = (3S)-hydroxytetradecanoate + CoA + H(+). The catalysed reaction is tetradecanoyl-CoA + H2O = tetradecanoate + CoA + H(+). Its function is as follows. Long-chain acyl-CoA thioesterase that could be involved in beta-oxidation of fatty acids. Is most active with 3,5-tetradecadienoyl-CoA, a metabolite of oleic acid that is hydrolyzed during oleate beta-oxidation, but can also use other substrates such as 3,5-dodecadienoyl-CoA, 9-cis-octadecenoyl-CoA, octadecanoyl-CoA, hexadecanoyl-CoA, 3-hydroxytetradecanoyl-CoA and tetradecanoyl-CoA. The sequence is that of Long-chain acyl-CoA thioesterase FadM from Escherichia coli (strain K12).